A 207-amino-acid polypeptide reads, in one-letter code: V-type ATP synthase subunit D (207 aa).

It belongs to the V-ATPase D subunit family.

Produces ATP from ADP in the presence of a proton gradient across the membrane. The protein is V-type ATP synthase subunit D of Streptococcus gordonii (strain Challis / ATCC 35105 / BCRC 15272 / CH1 / DL1 / V288).